A 955-amino-acid polypeptide reads, in one-letter code: B3 domain-containing protein Os07g0563300 (955 aa).

Composition is skewed to pro residues over residues 1-20 and 29-45; these read MSSP…PPPS and VQPP…PQQP. 2 disordered regions span residues 1–81 and 325–392; these read MSSP…QRPR and ARKG…SSSL. The segment covering 62–71 has biased composition (low complexity); the sequence is QHQQQQQGPP. The segment covering 332-342 has biased composition (polar residues); that stretch reads DPCSSVSTTFK. Basic and acidic residues predominate over residues 343-355; sequence LDSHHPSILKDDP. The segment covering 382-392 has biased composition (low complexity); that stretch reads QQQQQMASSSL. A DNA-binding region (TF-B3) is located at residues 453–554; it reads FEKMLSASDA…KLVMGFRKAT (102 aa). Composition is skewed to polar residues over residues 556 to 565 and 598 to 608; these read LSAEQDQPTK and NTESKSSSPVE. The tract at residues 556 to 642 is disordered; sequence LSAEQDQPTK…PLPVKRKATS (87 aa). A CW-type zinc finger spans residues 708-758; that stretch reads SGENHQWAQCEDCSKWRKLPVDALLPSKWTCSDNKWDSERSSCDSAQEINM. Zn(2+)-binding residues include C717, C720, C738, and C750. Residues 856 to 955 form a disordered region; that stretch reads MMRREKRQQS…ATRLLRDNPT (100 aa). Basic and acidic residues predominate over residues 862-877; sequence RQQSEKDSGVPRKREP. 2 stretches are compositionally biased toward polar residues: residues 878–900 and 920–933; these read GQSS…SSPH and TSSP…LNSQ. Residues 939–955 are compositionally biased toward basic and acidic residues; it reads EQSPKSDATRLLRDNPT.

The protein resides in the nucleus. In Oryza sativa subsp. japonica (Rice), this protein is B3 domain-containing protein Os07g0563300.